The primary structure comprises 61 residues: Metallothionein-1D (61 aa).

The interval 1 to 29 is beta; it reads MDPNCSCSTGGSCSCATSCTCKACRCTSC. Positions 5, 7, 13, 15, 19, 21, 24, 26, 29, 33, 34, 36, 37, 41, 44, 48, 50, 57, 59, and 60 each coordinate a divalent metal cation. The tract at residues 30–61 is alpha; sequence KKSCCSCCPAGCAKCAQGCICKGASDKCSCCA.

The protein belongs to the metallothionein superfamily. Type 1 family. Monomer.

In terms of biological role, metallothioneins have a high content of cysteine residues that bind various heavy metals; these proteins are transcriptionally regulated by both heavy metals and glucocorticoids. The sequence is that of Metallothionein-1D (MT1D) from Sus scrofa (Pig).